A 481-amino-acid chain; its full sequence is Proline--tRNA ligase (481 aa).

This sequence belongs to the class-II aminoacyl-tRNA synthetase family. ProS type 3 subfamily. Homodimer.

The protein localises to the cytoplasm. It catalyses the reaction tRNA(Pro) + L-proline + ATP = L-prolyl-tRNA(Pro) + AMP + diphosphate. Functionally, catalyzes the attachment of proline to tRNA(Pro) in a two-step reaction: proline is first activated by ATP to form Pro-AMP and then transferred to the acceptor end of tRNA(Pro). This chain is Proline--tRNA ligase, found in Chlorobium phaeovibrioides (strain DSM 265 / 1930) (Prosthecochloris vibrioformis (strain DSM 265)).